An 82-amino-acid polypeptide reads, in one-letter code: ATP synthase subunit c, chloroplastic (82 aa).

Met-1 is subject to N-formylmethionine. The next 2 helical transmembrane spans lie at 3–23 (PIVA…AAIG) and 57–77 (FAFM…LLFA).

This sequence belongs to the ATPase C chain family. In terms of assembly, F-type ATPases have 2 components, F(1) - the catalytic core - and F(0) - the membrane proton channel. F(1) has five subunits: alpha(3), beta(3), gamma(1), delta(1), epsilon(1). F(0) has four main subunits: a(1), b(1), b'(1) and c(10-14). The alpha and beta chains form an alternating ring which encloses part of the gamma chain. F(1) is attached to F(0) by a central stalk formed by the gamma and epsilon chains, while a peripheral stalk is formed by the delta, b and b' chains.

It localises to the plastid. It is found in the chloroplast thylakoid membrane. F(1)F(0) ATP synthase produces ATP from ADP in the presence of a proton or sodium gradient. F-type ATPases consist of two structural domains, F(1) containing the extramembraneous catalytic core and F(0) containing the membrane proton channel, linked together by a central stalk and a peripheral stalk. During catalysis, ATP synthesis in the catalytic domain of F(1) is coupled via a rotary mechanism of the central stalk subunits to proton translocation. Functionally, key component of the F(0) channel; it plays a direct role in translocation across the membrane. A homomeric c-ring of between 10-14 subunits forms the central stalk rotor element with the F(1) delta and epsilon subunits. This is ATP synthase subunit c, chloroplastic from Chlamydomonas reinhardtii (Chlamydomonas smithii).